A 770-amino-acid polypeptide reads, in one-letter code: Potassium transporter 25 (770 aa).

Topologically, residues 1–23 (MDLEAAHGAAAAPGKRRRRARES) are cytoplasmic. Residues 24-44 (WGASLLLAYQSLGVVYGDVAT) form a helical membrane-spanning segment. Over 45–70 (SPLYVYKSAFAGDDIQHSAGNEEIYG) the chain is Extracellular. Residues 71–91 (VLSFVFWTLTLISLVKYVLIV) form a helical membrane-spanning segment. Topologically, residues 92–152 (LRADDGGEGG…MLERYRVLQR (61 aa)) are cytoplasmic. Residues 153–173 (LLLLFALLGTCMVIGDGVLTP) form a helical membrane-spanning segment. At 174-194 (AVSVYSAVSGLELSMEHEHHK) the chain is on the extracellular side. Residues 195-215 (YVQLPVTCAILIGLFALQHYG) form a helical membrane-spanning segment. Over 216-218 (THR) the chain is Cytoplasmic. The helical transmembrane segment at 219-239 (VGFIFAPIVCVWLLCISAIGV) threads the bilayer. At 240 to 267 (YNIVHWNHHVYRALSPYYMYQFLKKTQT) the chain is on the extracellular side. Residues 268 to 288 (GGWMSLGGILLCVTGSEAMYA) traverse the membrane as a helical segment. Residues 289 to 299 (DLGHFSQSSIK) lie on the Cytoplasmic side of the membrane. Residues 300 to 320 (IAFMSVVYPALVLAYMGQAAY) traverse the membrane as a helical segment. Residues 321–346 (ISQHHSFENAYHIGFYVSVPEKLRWP) are Extracellular-facing. Residues 347-367 (VLVIAILAAVVGSQAVITGTF) form a helical membrane-spanning segment. Over 368–394 (SIIKQCSSLSCFPGVKIVHTSSTVHGQ) the chain is Cytoplasmic. Residues 395–415 (IYIPEINWILMILCLAVTLGF) traverse the membrane as a helical segment. Over 416 to 425 (RNTKHLANAQ) the chain is Extracellular. A helical transmembrane segment spans residues 426-446 (GLAVITVMLVTTCLMSLVIVL). Over 447-451 (CWNKS) the chain is Cytoplasmic. The chain crosses the membrane as a helical span at residues 452–472 (IFLALGFLIFFGTIEVLYFSA). The Extracellular portion of the chain corresponds to 473–479 (SLVKFHE). Residues 480 to 500 (GAWVPITLSFIFMIVMCVWHY) traverse the membrane as a helical segment. Over 501–770 (GTIKKYEFDF…TLEVGMVYQV (270 aa)) the chain is Cytoplasmic.

It belongs to the HAK/KUP transporter (TC 2.A.72.3) family.

It localises to the membrane. High-affinity potassium transporter. The chain is Potassium transporter 25 (HAK25) from Oryza sativa subsp. japonica (Rice).